A 237-amino-acid chain; its full sequence is Ribosomal RNA small subunit methyltransferase G (237 aa).

S-adenosyl-L-methionine contacts are provided by residues glycine 78, phenylalanine 83, 129–130 (AE), and arginine 148.

It belongs to the methyltransferase superfamily. RNA methyltransferase RsmG family.

The protein localises to the cytoplasm. Functionally, specifically methylates the N7 position of a guanine in 16S rRNA. The sequence is that of Ribosomal RNA small subunit methyltransferase G from Streptococcus thermophilus (strain ATCC BAA-491 / LMD-9).